The sequence spans 859 residues: MQEQYNPSEIEALVQKHWHDTKTFEVTEDQNKEKFYCLSMFPYPSGRLHMGHVRNYTIGDVVARFQRLQGKNVLQPIGWDSFGLPAENAAINNKTAPAPWTYQNIEYMKNQLKLLGFGYDWSREIATCTPEYYRWEQWFFTKLYEKGLVYKKTASVNWCPNDETVLANEQVQDGCCWRCDTPVEQKEIPQWFIKITAYAEELLNDIDTLDGWPEQVKTMQRNWIGRSEGVEMTFGVAGSDKSFDIYTTRPDTLMGVTYVAIAAGHPLAEIAAQTNPELAAFIDECKNSTTSEAELATMEKRGVATGLYAIHPITGKQVPIWAANFVLMNYGTGAVMSVPGHDQRDYEFAKKYHLPIEAVIKPAEGDLDISEAAYTEKGILFNSGEFDGLDFDGAFNVIANKLVAEGKGKRQVNYRLRDWGVSRQRYWGAPIPMVTLADGTVIPTPEDQLPVILPEDVVMDGIQSPIKADKEWAKTQVNGQDALRETDTFDTFMESSWYYARYCSPQAEQMLDPTKANYWLPVDQYIGGIEHACMHLLYFRFFHKLLRDAGLVNTNEPAKQLLTQGMVLADAFYYTNDKGARVWVSPLDVATTEKDDKGRITKAIDKDGNELVYTGMCKMSKSKNNGIDPQVMVEKYGADTVRLFMMFASPPELTLEWQESGVEGAHRFIKRLWKLASEYVAQDNSEALDVSKLTSEQKALRREVHKTIAKVTDDIGRRQMFNTAVAAVMELMNHLQKAPQTTGQDRAIIGEALSAVVRLLYPIIPHVSFTLWNELGNTNSIEDSQWPVVDESALVEDSKLIVVQVNGKVRAKITVAADADQASVEALGMADEQVIKYLDGVTVRKVIYVPGKLLSIVAN.

The 'HIGH' region signature appears at 42–52 (PYPSGRLHMGH). The 'KMSKS' region signature appears at 618–622 (KMSKS). Residue K621 coordinates ATP.

Belongs to the class-I aminoacyl-tRNA synthetase family.

Its subcellular location is the cytoplasm. The enzyme catalyses tRNA(Leu) + L-leucine + ATP = L-leucyl-tRNA(Leu) + AMP + diphosphate. In Shewanella oneidensis (strain ATCC 700550 / JCM 31522 / CIP 106686 / LMG 19005 / NCIMB 14063 / MR-1), this protein is Leucine--tRNA ligase.